Reading from the N-terminus, the 150-residue chain is 3-dehydroquinate dehydratase (150 aa).

The Proton acceptor role is filled by Y26. The substrate site is built by N77, H83, and D90. H103 serves as the catalytic Proton donor. Residues 104 to 105 (LS) and R114 contribute to the substrate site.

Belongs to the type-II 3-dehydroquinase family. As to quaternary structure, homododecamer.

The enzyme catalyses 3-dehydroquinate = 3-dehydroshikimate + H2O. It functions in the pathway metabolic intermediate biosynthesis; chorismate biosynthesis; chorismate from D-erythrose 4-phosphate and phosphoenolpyruvate: step 3/7. In terms of biological role, catalyzes a trans-dehydration via an enolate intermediate. In Yersinia enterocolitica serotype O:8 / biotype 1B (strain NCTC 13174 / 8081), this protein is 3-dehydroquinate dehydratase.